We begin with the raw amino-acid sequence, 516 residues long: Putative F-box and FNIP repeat-containing protein L414 (516 aa).

Positions 4–49 (INDLNMDVILHLLTFLTDKNKLNFMMTCTHLYQFISCVKYNNFQLF) constitute an F-box domain. 5 FNIP repeats span residues 123 to 165 (FNHT…FGEN), 166 to 208 (FNKM…LMYS), 341 to 383 (YNPK…NFNG), 385 to 428 (YDNI…FGKL), and 429 to 470 (YNKP…FGYM).

The polypeptide is Putative F-box and FNIP repeat-containing protein L414 (Acanthamoeba polyphaga (Amoeba)).